The primary structure comprises 147 residues: Protein phosphatase 1 regulatory subunit 14A (147 aa).

The span at 1–11 (MAAQRLGKRVL) shows a compositional bias: basic residues. The interval 1-36 (MAAQRLGKRVLSKLQSPSRARGPGGSPSGLQKRHAR) is disordered. A Phosphoserine modification is found at Ser-26. The segment at 35–120 (ARVTVKYDRR…LLAKLRGLHK (86 aa)) is inhibitory. Thr-38 is modified (phosphothreonine; by PKC). The interval 118–147 (LHKQPGFPQPSPSDDPSLSPRQDRAHTAPP) is disordered. Phosphoserine is present on residues Ser-128, Ser-134, and Ser-136. A compositionally biased stretch (basic and acidic residues) spans 138–147 (RQDRAHTAPP).

Belongs to the PP1 inhibitor family.

It is found in the cytoplasm. Its function is as follows. Inhibitor of PPP1CA. Has over 1000-fold higher inhibitory activity when phosphorylated, creating a molecular switch for regulating the phosphorylation status of PPP1CA substrates and smooth muscle contraction. The sequence is that of Protein phosphatase 1 regulatory subunit 14A (Ppp1r14a) from Mus musculus (Mouse).